Reading from the N-terminus, the 355-residue chain is UDP-N-acetylglucosamine--N-acetylmuramyl-(pentapeptide) pyrophosphoryl-undecaprenol N-acetylglucosamine transferase (355 aa).

Residues 15 to 17 (TGG), asparagine 127, arginine 163, serine 191, isoleucine 244, 263 to 268 (ALTVSE), and glutamine 288 contribute to the UDP-N-acetyl-alpha-D-glucosamine site.

This sequence belongs to the glycosyltransferase 28 family. MurG subfamily.

The protein localises to the cell inner membrane. The catalysed reaction is di-trans,octa-cis-undecaprenyl diphospho-N-acetyl-alpha-D-muramoyl-L-alanyl-D-glutamyl-meso-2,6-diaminopimeloyl-D-alanyl-D-alanine + UDP-N-acetyl-alpha-D-glucosamine = di-trans,octa-cis-undecaprenyl diphospho-[N-acetyl-alpha-D-glucosaminyl-(1-&gt;4)]-N-acetyl-alpha-D-muramoyl-L-alanyl-D-glutamyl-meso-2,6-diaminopimeloyl-D-alanyl-D-alanine + UDP + H(+). It functions in the pathway cell wall biogenesis; peptidoglycan biosynthesis. Its function is as follows. Cell wall formation. Catalyzes the transfer of a GlcNAc subunit on undecaprenyl-pyrophosphoryl-MurNAc-pentapeptide (lipid intermediate I) to form undecaprenyl-pyrophosphoryl-MurNAc-(pentapeptide)GlcNAc (lipid intermediate II). The polypeptide is UDP-N-acetylglucosamine--N-acetylmuramyl-(pentapeptide) pyrophosphoryl-undecaprenol N-acetylglucosamine transferase (Salmonella gallinarum (strain 287/91 / NCTC 13346)).